Here is a 305-residue protein sequence, read N- to C-terminus: Acetylglutamate kinase (305 aa).

Substrate-binding positions include 75 to 76 (GG), R97, and N202.

This sequence belongs to the acetylglutamate kinase family. ArgB subfamily.

It localises to the cytoplasm. The enzyme catalyses N-acetyl-L-glutamate + ATP = N-acetyl-L-glutamyl 5-phosphate + ADP. Its pathway is amino-acid biosynthesis; L-arginine biosynthesis; N(2)-acetyl-L-ornithine from L-glutamate: step 2/4. Functionally, catalyzes the ATP-dependent phosphorylation of N-acetyl-L-glutamate. In Rhodospirillum centenum (strain ATCC 51521 / SW), this protein is Acetylglutamate kinase.